Reading from the N-terminus, the 403-residue chain is Spindle assembly abnormal protein 5 (403 aa).

2 disordered regions span residues 24–79 (PRVF…AHPA) and 96–127 (TVEGTSRHTKKAIASPSQNHRMTEENQEENWR). Positions 116–127 (RMTEENQEENWR) are enriched in basic and acidic residues. A coiled-coil region spans residues 128–163 (DVMKNEFEVMRKEMQEEATKKQEELNAQNLNKMQEM). Disordered regions lie at residues 174–205 (AKPSAEESQDREKENWYEQSRHARQQKPANKI), 255–276 (AYSPLPPLSPPSGRYANGSSGN), 302–325 (RQWTSERNDNRTHDNYRPYEPDPQ), and 355–403 (YHVE…SRRK). The span at 177–194 (SAEESQDREKENWYEQSR) shows a compositional bias: basic and acidic residues. Positions 305–321 (TSERNDNRTHDNYRPYE) are enriched in basic and acidic residues. A compositionally biased stretch (acidic residues) spans 360-369 (VPEYEEEETE). The segment covering 379-403 (YHEPMETESAAERERRIREKYSRRK) has biased composition (basic and acidic residues).

Interacts with sas-6 via its coiled coil domain.

The protein resides in the cytoplasm. The protein localises to the cytoskeleton. Its subcellular location is the microtubule organizing center. It localises to the centrosome. It is found in the centriole. In terms of biological role, required for centrosome duplication. Essential for daughter-centriole formation. Requires both maternal and partenal expression, suggesting that it regulates centriole duplication during both spermatogenesis and early embryogenesis. This Caenorhabditis briggsae protein is Spindle assembly abnormal protein 5 (sas-5).